The following is a 544-amino-acid chain: uncharacterized protein (544 aa).

Positions 1–22 (MYFSQNAIILVMLMFVISAVFY) are cleaved as a signal peptide.

This is an uncharacterized protein from Methanocaldococcus jannaschii (strain ATCC 43067 / DSM 2661 / JAL-1 / JCM 10045 / NBRC 100440) (Methanococcus jannaschii).